The sequence spans 62 residues: Large ribosomal subunit protein bL33 (62 aa).

It belongs to the bacterial ribosomal protein bL33 family.

The protein is Large ribosomal subunit protein bL33 of Bacteroides thetaiotaomicron (strain ATCC 29148 / DSM 2079 / JCM 5827 / CCUG 10774 / NCTC 10582 / VPI-5482 / E50).